The sequence spans 968 residues: MPFALGQRWISDTESELGLGTVVQVEGRMVTVLFPATGENRMFSRAEAPLTRVIYNPGDSVESHEGWSLAVSELTEKDGIVIYHGIHSETGEQVTLRETLLNHNIRFNKPQDRLFAGQIDRLDRFGVRYQCQMLRHKLASSDLLGLQGPRVGLIPHQMWIAHEVGRRYAPRVLLADEVGLGKTIEAGLIIHQQLLTGRAERILIIVPDTLRHQWLVEMLRRFNLRFSVFDEDRCVEAYADHDNPFYTEQLVICSLELLRKKKRLDQALDADWDLLVVDEAHHLEWTEEAPSRAYQVVEALSEVIPGVLLLTATPDQLGHESHFARLRLLDPDRFYDYDAFLAEEDSYKDVAIAAEALAGNAKLPDAAINSLTELLGEKDISPSIRLIQADGIDAEVQQAARSELLQELLDRHGTGRVLYRNSRASVKGFPKRFFNAYPHAMPDQYQTAARVSGMMGGHKSLEAKAAQALSPEKLYQEFEDNSASWWKFDPRVDWLIEFLKSHRSKKVLIIASQAETALSLEEALRTREGIQATVFHEGMSIIERDKAGAYFAQEEGGAQALICSEIGSEGRNFQFASHLVLFDLPLNPDLLEQRIGRLDRIGQKNDIQIHLPYLEDTAQERLMQWYHQGLNAFELTCPSGHVLYSEFAEDLLNVLVVDDSDELTNLLNHTQSRYKELKHAMEQGRDKLLEINSHGGEKAMAIVQRLAQNDGDTHLIGSVIRLWDIIGVDQEDKGENSIILRPSEHMMFPTYPGLPEDGVTVTFDRDTALSRDDIALITQEHPLVQTGLDLITGSETGTTSVAILKNKALPAGTLFLELIYMADASAPKSSQLYRYLPPTPIRVLLDKNGNDLSAKVDYASFDKQLSAVNRHIGGKLVTASQPILHPLFAKGEEYAQVVVDEMVAQAREKMTQQLSAELSRLESLKAVNPNIREEELEYLRNQMQELNTYLDASQLQLDAIRMVLVSHV.

One can recognise a Helicase ATP-binding domain in the interval 163-332; sequence EVGRRYAPRV…FARLRLLDPD (170 aa). Residue 176–183 coordinates ATP; the sequence is DEVGLGKT. Positions 278–281 match the DEAH box motif; sequence DEAH. The 165-residue stretch at 491–655 folds into the Helicase C-terminal domain; it reads RVDWLIEFLK…EFAEDLLNVL (165 aa).

This sequence belongs to the SNF2/RAD54 helicase family. RapA subfamily. Interacts with the RNAP. Has a higher affinity for the core RNAP than for the holoenzyme. Its ATPase activity is stimulated by binding to RNAP.

Transcription regulator that activates transcription by stimulating RNA polymerase (RNAP) recycling in case of stress conditions such as supercoiled DNA or high salt concentrations. Probably acts by releasing the RNAP, when it is trapped or immobilized on tightly supercoiled DNA. Does not activate transcription on linear DNA. Probably not involved in DNA repair. In Shewanella baltica (strain OS223), this protein is RNA polymerase-associated protein RapA.